The sequence spans 329 residues: Glycerol-3-phosphate dehydrogenase [NAD(P)+] (329 aa).

Residues Trp11, Arg30, and Lys103 each coordinate NADPH. Sn-glycerol 3-phosphate-binding residues include Lys103, Gly132, and Ser134. NADPH is bound at residue Ala136. Sn-glycerol 3-phosphate-binding residues include Lys187, Asp240, Ser250, Arg251, and Asn252. Lys187 acts as the Proton acceptor in catalysis. Residue Arg251 participates in NADPH binding. The NADPH site is built by Val275 and Glu277.

This sequence belongs to the NAD-dependent glycerol-3-phosphate dehydrogenase family.

It is found in the cytoplasm. The catalysed reaction is sn-glycerol 3-phosphate + NAD(+) = dihydroxyacetone phosphate + NADH + H(+). It carries out the reaction sn-glycerol 3-phosphate + NADP(+) = dihydroxyacetone phosphate + NADPH + H(+). It functions in the pathway membrane lipid metabolism; glycerophospholipid metabolism. Functionally, catalyzes the reduction of the glycolytic intermediate dihydroxyacetone phosphate (DHAP) to sn-glycerol 3-phosphate (G3P), the key precursor for phospholipid synthesis. The polypeptide is Glycerol-3-phosphate dehydrogenase [NAD(P)+] (Methylobacillus flagellatus (strain ATCC 51484 / DSM 6875 / VKM B-1610 / KT)).